The primary structure comprises 376 residues: Erythronate-4-phosphate dehydrogenase (376 aa).

Substrate is bound by residues Ser45 and Thr67. NAD(+)-binding positions include 127-128 (QV), Asp147, and Thr176. Arg209 is an active-site residue. An NAD(+)-binding site is contributed by Asp233. Glu238 is an active-site residue. His255 serves as the catalytic Proton donor. An NAD(+)-binding site is contributed by Gly258. Tyr259 is a binding site for substrate.

Belongs to the D-isomer specific 2-hydroxyacid dehydrogenase family. PdxB subfamily. In terms of assembly, homodimer.

Its subcellular location is the cytoplasm. It carries out the reaction 4-phospho-D-erythronate + NAD(+) = (R)-3-hydroxy-2-oxo-4-phosphooxybutanoate + NADH + H(+). The protein operates within cofactor biosynthesis; pyridoxine 5'-phosphate biosynthesis; pyridoxine 5'-phosphate from D-erythrose 4-phosphate: step 2/5. Its function is as follows. Catalyzes the oxidation of erythronate-4-phosphate to 3-hydroxy-2-oxo-4-phosphonooxybutanoate. The protein is Erythronate-4-phosphate dehydrogenase of Aliivibrio fischeri (strain ATCC 700601 / ES114) (Vibrio fischeri).